Reading from the N-terminus, the 475-residue chain is Aspartyl/glutamyl-tRNA(Asn/Gln) amidotransferase subunit B (475 aa).

Belongs to the GatB/GatE family. GatB subfamily. As to quaternary structure, heterotrimer of A, B and C subunits.

It catalyses the reaction L-glutamyl-tRNA(Gln) + L-glutamine + ATP + H2O = L-glutaminyl-tRNA(Gln) + L-glutamate + ADP + phosphate + H(+). The catalysed reaction is L-aspartyl-tRNA(Asn) + L-glutamine + ATP + H2O = L-asparaginyl-tRNA(Asn) + L-glutamate + ADP + phosphate + 2 H(+). In terms of biological role, allows the formation of correctly charged Asn-tRNA(Asn) or Gln-tRNA(Gln) through the transamidation of misacylated Asp-tRNA(Asn) or Glu-tRNA(Gln) in organisms which lack either or both of asparaginyl-tRNA or glutaminyl-tRNA synthetases. The reaction takes place in the presence of glutamine and ATP through an activated phospho-Asp-tRNA(Asn) or phospho-Glu-tRNA(Gln). The protein is Aspartyl/glutamyl-tRNA(Asn/Gln) amidotransferase subunit B of Bacillus cereus (strain B4264).